The primary structure comprises 366 residues: Ribosomal RNA large subunit methyltransferase M (366 aa).

S-adenosyl-L-methionine contacts are provided by residues serine 188, 221–224 (CPGG), aspartate 240, aspartate 260, and aspartate 277. Catalysis depends on lysine 306, which acts as the Proton acceptor.

This sequence belongs to the class I-like SAM-binding methyltransferase superfamily. RNA methyltransferase RlmE family. RlmM subfamily. As to quaternary structure, monomer.

Its subcellular location is the cytoplasm. The catalysed reaction is cytidine(2498) in 23S rRNA + S-adenosyl-L-methionine = 2'-O-methylcytidine(2498) in 23S rRNA + S-adenosyl-L-homocysteine + H(+). In terms of biological role, catalyzes the 2'-O-methylation at nucleotide C2498 in 23S rRNA. This is Ribosomal RNA large subunit methyltransferase M from Salmonella arizonae (strain ATCC BAA-731 / CDC346-86 / RSK2980).